The following is a 247-amino-acid chain: Putative methyltransferase GWCH70_2453 (247 aa).

The protein belongs to the methyltransferase superfamily.

May be a S-adenosyl-L-methionine (SAM)-dependent methyltransferase. This Geobacillus sp. (strain WCH70) protein is Putative methyltransferase GWCH70_2453.